The chain runs to 245 residues: Flavin-dependent thymidylate synthase (245 aa).

One can recognise a ThyX domain in the interval 5-210 (IKVRLVNYTK…ELRPIIRWAK (206 aa)). FAD is bound by residues Ser59, 83-85 (RHR), and Gln91. DUMP-binding positions include 80–83 (QLVR), 91–95 (QQSMR), and Arg149. The ThyX motif motif lies at 83-93 (RHRIASYTQQS). Residues 165–167 (NLR) and His171 contribute to the FAD site. A dUMP-binding site is contributed by Arg176. The Involved in ionization of N3 of dUMP, leading to its activation role is filled by Arg176.

It belongs to the thymidylate synthase ThyX family. As to quaternary structure, homotetramer. The cofactor is FAD.

It catalyses the reaction dUMP + (6R)-5,10-methylene-5,6,7,8-tetrahydrofolate + NADPH + H(+) = dTMP + (6S)-5,6,7,8-tetrahydrofolate + NADP(+). It participates in pyrimidine metabolism; dTTP biosynthesis. Functionally, catalyzes the reductive methylation of 2'-deoxyuridine-5'-monophosphate (dUMP) to 2'-deoxythymidine-5'-monophosphate (dTMP) while utilizing 5,10-methylenetetrahydrofolate (mTHF) as the methyl donor, and NADPH and FADH(2) as the reductant. The protein is Flavin-dependent thymidylate synthase of Thermococcus onnurineus (strain NA1).